The chain runs to 897 residues: Schlafen family member 13 (897 aa).

The interval 2–355 is n'-domain region; that stretch reads EANHCSLGVY…WVEKMMDADP (354 aa). Active-site residues include E208 and E213. Zn(2+) contacts are provided by H284, C286, and C321. 599–606 is an ATP binding site; the sequence is GLPGSGKT.

The protein belongs to the Schlafen family. Subgroup III subfamily. Mg(2+) serves as cofactor.

The protein resides in the cytoplasm. Its function is as follows. Endoribonuclease that cleaves tRNAs and rRNAs. Cleaves tRNAs 11 nucleotides from the 3'-terminus at the acceptor stem. Does not act on tRNA(Sec). Able to restrict HIV-1 virus replication; ability to inhibit HIV-1 replication is dependent on endoribonuclease activity. This chain is Schlafen family member 13, found in Homo sapiens (Human).